A 310-amino-acid chain; its full sequence is tRNA dimethylallyltransferase (310 aa).

ATP is bound at residue 19-26 (GPTGTGKS). Substrate is bound at residue 21–26 (TGTGKS).

Belongs to the IPP transferase family. Monomer. Requires Mg(2+) as cofactor.

It carries out the reaction adenosine(37) in tRNA + dimethylallyl diphosphate = N(6)-dimethylallyladenosine(37) in tRNA + diphosphate. In terms of biological role, catalyzes the transfer of a dimethylallyl group onto the adenine at position 37 in tRNAs that read codons beginning with uridine, leading to the formation of N6-(dimethylallyl)adenosine (i(6)A). In Saccharopolyspora erythraea (strain ATCC 11635 / DSM 40517 / JCM 4748 / NBRC 13426 / NCIMB 8594 / NRRL 2338), this protein is tRNA dimethylallyltransferase.